The following is a 208-amino-acid chain: Anti-sigma-W factor RsiW (208 aa).

Over 1-87 the chain is Cytoplasmic; that stretch reads MSCPEQIVQL…ASVKRWFRTH (87 aa). The Zn(2+) site is built by Cys-3, His-30, Cys-34, and Cys-37. The chain crosses the membrane as a helical span at residues 88-108; that stretch reads PVIAAAAVFIILMGGGFFNSW. Over 109–208 the chain is Extracellular; that stretch reads HNDHNFSVSK…LDAFNPNGEE (100 aa).

Belongs to the zinc-associated anti-sigma factor (ZAS) superfamily. Anti-sigma-W factor family. Forms a heterodimer with cognate sigma factor SigW, which probably prevents SigW from binding to DNA. It depends on Zn(2+) as a cofactor. In terms of processing, is processed by successive proteolytic events. First, the extracellular region of RsiW is cleaved by PrsW (site-1 cleavage) in response to cell envelope stresses. In a reconstituted E.coli system PrsW cuts between Ala-168 and Ser-169 followed by trimming by E.coli Tsp; the endogenous extracellular exopeptidase responsible for the event in B.subtilis has not been identified. Next, it undergoes cleavage at an intramembrane site (site-2 cleavage) mediated by RasP. This cleavage uncovers a cryptic proteolytic tag with conserved alanine residues in the transmembrane segment, that is recognized mainly by the ClpXP protease, which completely degrades the protein in the cytoplasm and leads to the induction of the sigma-W-controlled genes.

It is found in the cell membrane. In terms of biological role, the anti-sigma factor for extracytoplasmic function (ECF) sigma factor sigma-W (SigW). Holds SigW, its cognate ECF sigma factor, in an inactive form until released by regulated intramembrane proteolysis (RIP). SigW and RsiW mediate cell response to cell wall stress. RIP occurs when an extracytoplasmic signal triggers a concerted proteolytic cascade to transmit information and elicit cellular responses. The membrane-spanning regulatory substrate protein is first cut periplasmically (site-1 protease, S1P, PrsW), then within the membrane itself (site-2 protease, S2P, RasP), while cytoplasmic proteases finish degrading the anti-sigma factor, liberating sigma-W. The sequence is that of Anti-sigma-W factor RsiW (rsiW) from Bacillus subtilis (strain 168).